The sequence spans 213 residues: MDARILKEDDESGLPNKQADVTLLHGKPTQADAEAAVRTLLLWAGDDPEREGLLETPKRVAKAYKELFAGYTESPEEVLGTVFEEVGGYNDLVLVKDISFHSHCEHHMVPIIGKAHVAYLPDHKVVGLSKIARVVDIFARRLQTQESITAQIADSIQRILKPRGVAVMIEAEHMCMAMRGIRKQGSTTITTTFTGEMQVNAEEQVRFMTLTRR.

Zn(2+) is bound by residues C104, H107, and C175.

It belongs to the GTP cyclohydrolase I family. As to quaternary structure, toroid-shaped homodecamer, composed of two pentamers of five dimers.

The enzyme catalyses GTP + H2O = 7,8-dihydroneopterin 3'-triphosphate + formate + H(+). Its pathway is cofactor biosynthesis; 7,8-dihydroneopterin triphosphate biosynthesis; 7,8-dihydroneopterin triphosphate from GTP: step 1/1. This is GTP cyclohydrolase 1 from Brucella anthropi (strain ATCC 49188 / DSM 6882 / CCUG 24695 / JCM 21032 / LMG 3331 / NBRC 15819 / NCTC 12168 / Alc 37) (Ochrobactrum anthropi).